A 334-amino-acid chain; its full sequence is S-adenosylmethionine decarboxylase proenzyme 1 (334 aa).

A substrate-binding site is contributed by Phe7. Residues Glu8 and Glu11 contribute to the active site. Glu67 contacts substrate. Catalysis depends on Ser68, which acts as the Schiff-base intermediate with substrate; via pyruvic acid. Position 68 is a pyruvic acid (Ser); by autocatalysis (Ser68). Residue Cys82 is the Proton donor; for catalytic activity of the active site. Position 223 (Phe223) interacts with substrate. Active-site proton acceptor; for processing activity residues include Ser229 and His243. Residue Glu247 participates in substrate binding. Ser298 carries the phosphoserine modification.

This sequence belongs to the eukaryotic AdoMetDC family. As to quaternary structure, heterotetramer of two alpha and two beta chains. Pyruvate is required as a cofactor. Post-translationally, is synthesized initially as an inactive proenzyme. Formation of the active enzyme involves a self-maturation process in which the active site pyruvoyl group is generated from an internal serine residue via an autocatalytic post-translational modification. Two non-identical subunits are generated from the proenzyme in this reaction, and the pyruvate is formed at the N-terminus of the alpha chain, which is derived from the carboxyl end of the proenzyme. The post-translation cleavage follows an unusual pathway, termed non-hydrolytic serinolysis, in which the side chain hydroxyl group of the serine supplies its oxygen atom to form the C-terminus of the beta chain, while the remainder of the serine residue undergoes an oxidative deamination to produce ammonia and the pyruvoyl group blocking the N-terminus of the alpha chain. Expressed in embryonic stem cells; subsequently down-regulated in differentiating neural precursor cells.

It carries out the reaction S-adenosyl-L-methionine + H(+) = S-adenosyl 3-(methylsulfanyl)propylamine + CO2. The protein operates within amine and polyamine biosynthesis; S-adenosylmethioninamine biosynthesis; S-adenosylmethioninamine from S-adenosyl-L-methionine: step 1/1. Essential for biosynthesis of the polyamines spermidine and spermine. Promotes maintenance and self-renewal of embryonic stem cells, by maintaining spermine levels. The protein is S-adenosylmethionine decarboxylase proenzyme 1 (Amd1) of Mus musculus (Mouse).